A 544-amino-acid polypeptide reads, in one-letter code: Putative ligase Rv1013 (544 aa).

K528 is covalently cross-linked (Isoglutamyl lysine isopeptide (Lys-Gln) (interchain with Q-Cter in protein Pup)).

This sequence belongs to the ATP-dependent AMP-binding enzyme family. Pupylated at Lys-528 by the prokaryotic ubiquitin-like protein Pup, which probably leads to its degradation by the proteasome.

This chain is Putative ligase Rv1013 (pks16), found in Mycobacterium tuberculosis (strain ATCC 25618 / H37Rv).